Here is a 344-residue protein sequence, read N- to C-terminus: Polycomb group RING finger protein 2 (344 aa).

Residues 18-57 (CALCGGYFIDATTIVECLHSFCKTCIVRYLETNKYCPMCD) form an RING-type zinc finger. Residues K51 and K88 each participate in a glycyl lysine isopeptide (Lys-Gly) (interchain with G-Cter in SUMO2) cross-link. Residues 81–95 (KLVPGLFKDEMKRRR) carry the Nuclear localization signal motif. A compositionally biased stretch (polar residues) spans 240–253 (TVPTPSEGTNTSGA). Residues 240–344 (TVPTPSEGTN…VNGAPVPPLT (105 aa)) form a disordered region. The span at 263 to 313 (APSPATLPATSSSLPSPATPSHGSPSSHGPPATHPTSPTPPSTASGATTAA) shows a compositional bias: low complexity. Residues 314-328 (NGGSLNCLQTPSSTS) are compositionally biased toward polar residues. T344 is subject to Phosphothreonine.

Exists as both a monomer and homodimer. Component of a PRC1-like complex. Interacts with CBX8, RING1 and RNF2. Interacts with CBX7. Interacts with PHC2. Phosphorylated. Homodimer formation is regulated by phosphorylation with only unphosphorylated proteins forming homodimers. As to expression, detected in all tissues examined with high expression found in placenta lung and kidney and low expression, in liver, pancreas and skeletal muscle.

The protein resides in the nucleus. Transcriptional repressor. Binds specifically to the DNA sequence 5'-GACTNGACT-3'. Has tumor suppressor activity. May play a role in control of cell proliferation and/or neural cell development. Regulates proliferation of early T progenitor cells by maintaining expression of HES1. Also plays a role in antero-posterior specification of the axial skeleton and negative regulation of the self-renewal activity of hematopoietic stem cells. Component of a Polycomb group (PcG) multiprotein PRC1-like complex, a complex class required to maintain the transcriptionally repressive state of many genes, including Hox genes, throughout development. PcG PRC1 complex acts via chromatin remodeling and modification of histones; it mediates monoubiquitination of histone H2A 'Lys-119', rendering chromatin heritably changed in its expressibility. Within the PRC1-like complex, regulates RNF2 ubiquitin ligase activity. This is Polycomb group RING finger protein 2 (PCGF2) from Homo sapiens (Human).